A 212-amino-acid polypeptide reads, in one-letter code: Thymidylate kinase (212 aa).

Position 10–17 (10–17 (GIDGCGKT)) interacts with ATP.

This sequence belongs to the thymidylate kinase family.

It catalyses the reaction dTMP + ATP = dTDP + ADP. Functionally, phosphorylation of dTMP to form dTDP in both de novo and salvage pathways of dTTP synthesis. In Synechococcus sp. (strain RCC307), this protein is Thymidylate kinase.